The sequence spans 228 residues: 2-C-methyl-D-erythritol 4-phosphate cytidylyltransferase (228 aa).

This sequence belongs to the IspD/TarI cytidylyltransferase family. IspD subfamily.

It carries out the reaction 2-C-methyl-D-erythritol 4-phosphate + CTP + H(+) = 4-CDP-2-C-methyl-D-erythritol + diphosphate. It functions in the pathway isoprenoid biosynthesis; isopentenyl diphosphate biosynthesis via DXP pathway; isopentenyl diphosphate from 1-deoxy-D-xylulose 5-phosphate: step 2/6. Catalyzes the formation of 4-diphosphocytidyl-2-C-methyl-D-erythritol from CTP and 2-C-methyl-D-erythritol 4-phosphate (MEP). The chain is 2-C-methyl-D-erythritol 4-phosphate cytidylyltransferase from Actinobacillus pleuropneumoniae serotype 5b (strain L20).